We begin with the raw amino-acid sequence, 516 residues long: Beta-glucosidase 1 (516 aa).

The signal sequence occupies residues 1–21 (MGHRLVVVLLLALLVAGAARA). Position 68 (Q68) interacts with a beta-D-glucoside. N96 carries N-linked (GlcNAc...) asparagine glycosylation. A beta-D-glucoside-binding positions include H169 and 214–215 (NE). Catalysis depends on E215, which acts as the Proton donor. C234 and C237 are joined by a disulfide. An N-linked (GlcNAc...) asparagine glycan is attached at N290. Residue Y353 participates in a beta-D-glucoside binding. The N-linked (GlcNAc...) asparagine glycan is linked to N364. Residue E424 participates in a beta-D-glucoside binding. E424 acts as the Nucleophile in catalysis. N-linked (GlcNAc...) asparagine glycosylation is present at N432. A beta-D-glucoside is bound by residues W471, 478 to 479 (EW), and F487.

This sequence belongs to the glycosyl hydrolase 1 family.

It catalyses the reaction Hydrolysis of terminal, non-reducing beta-D-glucosyl residues with release of beta-D-glucose.. This is Beta-glucosidase 1 (BGLU1) from Oryza sativa subsp. japonica (Rice).